Reading from the N-terminus, the 697-residue chain is DNA ligase (697 aa).

Residues 41–45 (DPVYD), 90–91 (SL), and glutamate 129 each bind NAD(+). Lysine 131 serves as the catalytic N6-AMP-lysine intermediate. The NAD(+) site is built by arginine 152, glutamate 189, lysine 308, and lysine 332. 4 residues coordinate Zn(2+): cysteine 426, cysteine 429, cysteine 444, and cysteine 449. In terms of domain architecture, BRCT spans 617–697 (AANHHLTGST…ALQNMLRGST (81 aa)).

The protein belongs to the NAD-dependent DNA ligase family. LigA subfamily. The cofactor is Mg(2+). It depends on Mn(2+) as a cofactor.

The enzyme catalyses NAD(+) + (deoxyribonucleotide)n-3'-hydroxyl + 5'-phospho-(deoxyribonucleotide)m = (deoxyribonucleotide)n+m + AMP + beta-nicotinamide D-nucleotide.. DNA ligase that catalyzes the formation of phosphodiester linkages between 5'-phosphoryl and 3'-hydroxyl groups in double-stranded DNA using NAD as a coenzyme and as the energy source for the reaction. It is essential for DNA replication and repair of damaged DNA. The sequence is that of DNA ligase from Synechococcus sp. (strain CC9311).